Consider the following 431-residue polypeptide: Dual-specificity RNA methyltransferase RlmN (431 aa).

Positions 1 to 26 are disordered; that stretch reads MATASLDTARPERRAGSDPFIEKTPE. The segment covering 9 to 26 has biased composition (basic and acidic residues); it reads ARPERRAGSDPFIEKTPE. The Proton acceptor role is filled by glutamate 138. Positions 144 to 394 constitute a Radical SAM core domain; the sequence is ANDRGTLCVS…VRTPRGRDIL (251 aa). Residues cysteine 151 and cysteine 397 are joined by a disulfide bond. Cysteine 158, cysteine 162, and cysteine 165 together coordinate [4Fe-4S] cluster. S-adenosyl-L-methionine is bound by residues 223 to 224, serine 255, 277 to 279, and asparagine 354; these read GE and SLH. The active-site S-methylcysteine intermediate is the cysteine 397.

The protein belongs to the radical SAM superfamily. RlmN family. [4Fe-4S] cluster serves as cofactor.

The protein resides in the cytoplasm. It catalyses the reaction adenosine(2503) in 23S rRNA + 2 reduced [2Fe-2S]-[ferredoxin] + 2 S-adenosyl-L-methionine = 2-methyladenosine(2503) in 23S rRNA + 5'-deoxyadenosine + L-methionine + 2 oxidized [2Fe-2S]-[ferredoxin] + S-adenosyl-L-homocysteine. It carries out the reaction adenosine(37) in tRNA + 2 reduced [2Fe-2S]-[ferredoxin] + 2 S-adenosyl-L-methionine = 2-methyladenosine(37) in tRNA + 5'-deoxyadenosine + L-methionine + 2 oxidized [2Fe-2S]-[ferredoxin] + S-adenosyl-L-homocysteine. In terms of biological role, specifically methylates position 2 of adenine 2503 in 23S rRNA and position 2 of adenine 37 in tRNAs. m2A2503 modification seems to play a crucial role in the proofreading step occurring at the peptidyl transferase center and thus would serve to optimize ribosomal fidelity. The chain is Dual-specificity RNA methyltransferase RlmN from Methylobacterium sp. (strain 4-46).